Reading from the N-terminus, the 306-residue chain is tRNA pseudouridine synthase B (306 aa).

Asp38 (nucleophile) is an active-site residue.

Belongs to the pseudouridine synthase TruB family. Type 1 subfamily.

The catalysed reaction is uridine(55) in tRNA = pseudouridine(55) in tRNA. Its function is as follows. Responsible for synthesis of pseudouridine from uracil-55 in the psi GC loop of transfer RNAs. The protein is tRNA pseudouridine synthase B of Syntrophotalea carbinolica (strain DSM 2380 / NBRC 103641 / GraBd1) (Pelobacter carbinolicus).